A 261-amino-acid chain; its full sequence is Cytochrome c oxidase subunit 3 (261 aa).

Residues 1-15 (MTHQLHQYHLVDPSP) are Mitochondrial matrix-facing. A helical membrane pass occupies residues 16–34 (WPLTGAMGSLLLASGLAVW). The Mitochondrial intermembrane portion of the chain corresponds to 35-40 (FHTNNT). A helical membrane pass occupies residues 41 to 66 (MLLKFGLLTLLLTMFQWWRDIIREST). Over 67–72 (YQGHHT) the chain is Mitochondrial matrix. Residues 73–105 (SGVQKNMRYGMILFITSEVFFFLGFFWALYHVS) traverse the membrane as a helical segment. Residues 106–128 (LVPTPELGAEWPPIGITPLNPME) lie on the Mitochondrial intermembrane side of the membrane. Residues 129–152 (VPLLNTAVLLSSGATITWSHHTMM) traverse the membrane as a helical segment. The Mitochondrial matrix segment spans residues 153-155 (KGN). A helical transmembrane segment spans residues 156–183 (KKEATHALMLTIILGAYFTALQLSEYME). Over 184–190 (TPFTIAD) the chain is Mitochondrial intermembrane. A helical membrane pass occupies residues 191-223 (SVYGSLFFVATGFHGLHVMIGTSFLMVCALRLA). Residues 224–232 (KHHFTITHH) lie on the Mitochondrial matrix side of the membrane. A helical transmembrane segment spans residues 233–256 (FGYEAAIWYWHFVDIVWLFLYISV). At 257–261 (YWWGS) the chain is on the mitochondrial intermembrane side.

It belongs to the cytochrome c oxidase subunit 3 family. As to quaternary structure, component of the cytochrome c oxidase (complex IV, CIV), a multisubunit enzyme composed of 14 subunits. The complex is composed of a catalytic core of 3 subunits MT-CO1, MT-CO2 and MT-CO3, encoded in the mitochondrial DNA, and 11 supernumerary subunits COX4I, COX5A, COX5B, COX6A, COX6B, COX6C, COX7A, COX7B, COX7C, COX8 and NDUFA4, which are encoded in the nuclear genome. The complex exists as a monomer or a dimer and forms supercomplexes (SCs) in the inner mitochondrial membrane with NADH-ubiquinone oxidoreductase (complex I, CI) and ubiquinol-cytochrome c oxidoreductase (cytochrome b-c1 complex, complex III, CIII), resulting in different assemblies (supercomplex SCI(1)III(2)IV(1) and megacomplex MCI(2)III(2)IV(2)).

The protein resides in the mitochondrion inner membrane. The catalysed reaction is 4 Fe(II)-[cytochrome c] + O2 + 8 H(+)(in) = 4 Fe(III)-[cytochrome c] + 2 H2O + 4 H(+)(out). Its function is as follows. Component of the cytochrome c oxidase, the last enzyme in the mitochondrial electron transport chain which drives oxidative phosphorylation. The respiratory chain contains 3 multisubunit complexes succinate dehydrogenase (complex II, CII), ubiquinol-cytochrome c oxidoreductase (cytochrome b-c1 complex, complex III, CIII) and cytochrome c oxidase (complex IV, CIV), that cooperate to transfer electrons derived from NADH and succinate to molecular oxygen, creating an electrochemical gradient over the inner membrane that drives transmembrane transport and the ATP synthase. Cytochrome c oxidase is the component of the respiratory chain that catalyzes the reduction of oxygen to water. Electrons originating from reduced cytochrome c in the intermembrane space (IMS) are transferred via the dinuclear copper A center (CU(A)) of subunit 2 and heme A of subunit 1 to the active site in subunit 1, a binuclear center (BNC) formed by heme A3 and copper B (CU(B)). The BNC reduces molecular oxygen to 2 water molecules using 4 electrons from cytochrome c in the IMS and 4 protons from the mitochondrial matrix. This Lycodon semicarinatus (Ryukyu odd-tooth snake) protein is Cytochrome c oxidase subunit 3 (MT-CO3).